The following is a 502-amino-acid chain: MAIKAEEISALLRSQIENYESEMSVTDVGTVLQIGDGIALIHGLNDCMAGELVEFSNGVLGLAQNLEESNVGVVILGPYTEITEGDEVRRTGRIMEVPVGEELIGRVVNPLGQPIDGQGPINTTKTRPVEQKATGVMARKSVDEPLQTGIKAIDALVPIGRGQRELIIGDRQTGKTTIGIDTILNQKGLDTICIYVAIGQKDSTVRANVEKLRQAGALDYTIVVSASASEPSPLLYIAPYSGVTMGEEFMFNGKHVLIVYDDLTKQAAAYRELSLLLRRPPGREAYPGDVFYLHSRLLERAAKLNDDLGGGSITALPIIETQAGDISAYVPTNVISITDGQIFLQSDLFFSGVRPAINAGQSVSRVGGSAQIKAMKKVAGTLRLDLASYRELESFAQFGSDLDEFTARKLERGKRTVEVLKQDQNKPLPVENQVLIIYALTKGYLDDIPVEDITRFEDELNSWTKSNGSDLLNEIRETGGLPSDDKFEATINEFKKSFSKSE.

Positions 115 to 134 (IDGQGPINTTKTRPVEQKAT) are disordered. 169-176 (GDRQTGKT) contributes to the ATP binding site.

It belongs to the ATPase alpha/beta chains family. F-type ATPases have 2 components, CF(1) - the catalytic core - and CF(0) - the membrane proton channel. CF(1) has five subunits: alpha(3), beta(3), gamma(1), delta(1), epsilon(1). CF(0) has three main subunits: a(1), b(2) and c(9-12). The alpha and beta chains form an alternating ring which encloses part of the gamma chain. CF(1) is attached to CF(0) by a central stalk formed by the gamma and epsilon chains, while a peripheral stalk is formed by the delta and b chains.

It is found in the cell membrane. The catalysed reaction is ATP + H2O + 4 H(+)(in) = ADP + phosphate + 5 H(+)(out). Produces ATP from ADP in the presence of a proton gradient across the membrane. The alpha chain is a regulatory subunit. The protein is ATP synthase subunit alpha of Staphylococcus haemolyticus (strain JCSC1435).